We begin with the raw amino-acid sequence, 39 residues long: Cytochrome b559 subunit beta (39 aa).

A helical transmembrane segment spans residues 14 to 30; that stretch reads WLAVHGLAVPTVFFLGS. His18 provides a ligand contact to heme.

The protein belongs to the PsbE/PsbF family. As to quaternary structure, heterodimer of an alpha subunit and a beta subunit. PSII is composed of 1 copy each of membrane proteins PsbA, PsbB, PsbC, PsbD, PsbE, PsbF, PsbH, PsbI, PsbJ, PsbK, PsbL, PsbM, PsbT, PsbX, PsbY, PsbZ, Psb30/Ycf12, at least 3 peripheral proteins of the oxygen-evolving complex and a large number of cofactors. It forms dimeric complexes. The cofactor is heme b.

It localises to the plastid. It is found in the chloroplast thylakoid membrane. In terms of biological role, this b-type cytochrome is tightly associated with the reaction center of photosystem II (PSII). PSII is a light-driven water:plastoquinone oxidoreductase that uses light energy to abstract electrons from H(2)O, generating O(2) and a proton gradient subsequently used for ATP formation. It consists of a core antenna complex that captures photons, and an electron transfer chain that converts photonic excitation into a charge separation. The polypeptide is Cytochrome b559 subunit beta (Welwitschia mirabilis (Tree tumbo)).